A 605-amino-acid polypeptide reads, in one-letter code: Phosphoenolpyruvate carboxykinase (ATP) (605 aa).

The segment covering 27–48 has biased composition (low complexity); that stretch reads SGPSSSFINNNNSNNNNNKSSN. The segment at 27–67 is disordered; sequence SGPSSSFINNNNSNNNNNKSSNMFNHDHVNKTNLHPGGVKP. An ATP-binding site is contributed by 307-314; sequence GLSGTGKT.

Belongs to the phosphoenolpyruvate carboxykinase (ATP) family.

The catalysed reaction is oxaloacetate + ATP = phosphoenolpyruvate + ADP + CO2. Its pathway is carbohydrate biosynthesis; gluconeogenesis. The sequence is that of Phosphoenolpyruvate carboxykinase (ATP) (acu-6) from Neurospora crassa (strain ATCC 24698 / 74-OR23-1A / CBS 708.71 / DSM 1257 / FGSC 987).